The chain runs to 131 residues: uncharacterized protein (131 aa).

The protein localises to the plastid. It is found in the chloroplast. This is an uncharacterized protein from Chlorella vulgaris (Green alga).